The primary structure comprises 265 residues: MLLTIDVGNTHTVLGLFDGEEIVEHWRISTDARRTADELAVLLQGLMGMHPLLGMELGDGIEGIAICATVPSVLHELREVTRRYYGDVPAVLVEPGVKTGVPILMDNPKEVGADRIINAVAAVELYGGPAIVVDFGTATTFDAVSPRGEYTGGVIAPGIEISVEALGVKGAQLRKIELARPRSVIGKNTVEAMQSGIVYGFAGQVDGVVARMKKELAADPDDVTVIATGGLAPMVLGESSVIDEHEPWLTLIGLRLVYERNVSRA.

Residue 6–13 (DVGNTHTV) participates in ATP binding. Residue 112–115 (GADR) participates in substrate binding. The active-site Proton acceptor is the Asp-114. Asp-134 provides a ligand contact to K(+). Thr-137 provides a ligand contact to ATP. Thr-189 is a binding site for substrate.

It belongs to the type III pantothenate kinase family. As to quaternary structure, homodimer. NH4(+) is required as a cofactor. K(+) serves as cofactor.

It localises to the cytoplasm. It catalyses the reaction (R)-pantothenate + ATP = (R)-4'-phosphopantothenate + ADP + H(+). It functions in the pathway cofactor biosynthesis; coenzyme A biosynthesis; CoA from (R)-pantothenate: step 1/5. Functionally, catalyzes the phosphorylation of pantothenate (Pan), the first step in CoA biosynthesis. The protein is Type III pantothenate kinase of Streptomyces griseus subsp. griseus (strain JCM 4626 / CBS 651.72 / NBRC 13350 / KCC S-0626 / ISP 5235).